Reading from the N-terminus, the 166-residue chain is PR-toxin biosynthesis cluster protein 10 (166 aa).

Functionally, part of the gene cluster that mediates the biosynthesis of PR-toxin, a bicyclic sesquiterpene belonging to the eremophilane class and acting as a mycotoxin. The first step of the pathway is catalyzed by the aristolochene synthase which performs the cyclization of trans,trans-farnesyl diphosphate (FPP) to the bicyclic sesquiterpene aristolochene. Following the formation of aristolochene, the non-oxygenated aristolochene is converted to the trioxygenated intermediate eremofortin B, via 7-epi-neopetasone. This conversion appears to involve three enzymes, a hydroxysterol oxidase-like enzyme, the quinone-oxidase prx3 that forms the quinone-type-structure in the bicyclic nucleus of aristolochene with the C8-oxo group and the C-3 hydroxyl group, and the P450 monooxygenase prx9 that introduces the epoxide at the double bond between carbons 1 and 2. No monoxy or dioxy-intermediates have been reported to be released to the broth, so these three early oxidative reactions may be coupled together. Eremofortin B is further oxidized by another P450 monooxygenase, that introduces a second epoxide between carbons 7 and 11 prior to acetylation to eremofortin A by the acetyltransferase prx11. The second epoxidation may be performed by a second P450 monooxygenase. After the acetylation step, eremofortin A is converted to eremofortin C and then to PR-toxin. First the conversion of eremofortin A to eremofortin C proceeds by oxidation of the side chain of the molecule at C-12 and is catalyzed by the short-chain oxidoreductase prx1. The cytochrome P450 monooxygenase prx8 also plays a role in this step. The primary alcohol formed at C-12 is finally oxidized by the short-chain alcohol dehydrogenase prx4 that forms PR-toxin. The chain is PR-toxin biosynthesis cluster protein 10 from Penicillium rubens (strain ATCC 28089 / DSM 1075 / NRRL 1951 / Wisconsin 54-1255) (Penicillium chrysogenum).